The chain runs to 1349 residues: Patatin-like phospholipase domain-containing protein 7 (1349 aa).

Residues 1 to 36 are Lumenal-facing; that stretch reads MQKEEDVCPEAGYCLGTALSSWGLHFMEEHSQSTML. Residues 37–57 form a helical membrane-spanning segment; the sequence is MGIGIGVLLTLAFVGLAAFFV. The Cytoplasmic segment spans residues 58–1349; that stretch reads YRKVSRFRRA…DQGPRLYRPS (1292 aa). 170-297 is an a nucleoside 3',5'-cyclic phosphate binding site; sequence VLGHFEKPLF…VRVVQIIMVR (128 aa). The disordered stretch occupies residues 340-361; sequence MSYGPEEQLERSPRLSEFNSSD. Ser-341 and Ser-377 each carry phosphoserine. Residues 496–599 and 610–715 contribute to the a nucleoside 3',5'-cyclic phosphate site; these read FLHV…VVRR and ALDW…LGEK. The involved in the binding to lipid droplets stretch occupies residues 678–964; sequence VHAVRDSELA…RGCAQVGILR (287 aa). Residues 947 to 1113 enclose the PNPLA domain; sequence LVLGGGGARG…INNLPADVAR (167 aa). A GXGXXG motif is present at residues 951-956; it reads GGGARG. Positions 978 to 982 match the GXSXG motif; the sequence is GTSIG. Catalysis depends on Ser-980, which acts as the Nucleophile. Catalysis depends on Asp-1100, which acts as the Proton acceptor. A DGA/G motif is present at residues 1100 to 1102; it reads DGG. At Ser-1277 the chain carries Phosphoserine. Thr-1281 is subject to Phosphothreonine. Positions 1297–1349 are disordered; the sequence is DFQSTGIELDSDSECEPSMSQGPHSLTSPKQSQDSFPWLPNQDDQGPRLYRPS. Positions 1314-1331 are enriched in polar residues; sequence SMSQGPHSLTSPKQSQDS.

This sequence belongs to the NTE family. In terms of tissue distribution, expressed in the brain, liver, kidney, lung and testis.

It is found in the endoplasmic reticulum membrane. It localises to the lipid droplet. It carries out the reaction a 1-acyl-sn-glycero-3-phosphocholine + H2O = sn-glycerol 3-phosphocholine + a fatty acid + H(+). It catalyses the reaction 1-(9Z-octadecenoyl)-sn-glycero-3-phosphocholine + H2O = sn-glycerol 3-phosphocholine + (9Z)-octadecenoate + H(+). The catalysed reaction is 1-(9Z-octadecenoyl)-sn-glycero-3-phosphoethanolamine + H2O = sn-glycero-3-phosphoethanolamine + (9Z)-octadecenoate + H(+). The enzyme catalyses 1-(9Z-octadecenoyl)-sn-glycero-3-phospho-L-serine + H2O = sn-glycero-3-phospho-L-serine + (9Z)-octadecenoate + H(+). It carries out the reaction 1-hexadecanoyl-sn-glycero-3-phosphocholine + H2O = sn-glycerol 3-phosphocholine + hexadecanoate + H(+). It catalyses the reaction 1-hexadecanoyl-sn-glycero-3-phosphate + H2O = sn-glycerol 3-phosphate + hexadecanoate + H(+). Lysophospholipase which preferentially deacylates unsaturated lysophosphatidylcholine (C18:1), generating glycerophosphocholine. Also can deacylate, to a lesser extent, lysophosphatidylethanolamine (C18:1), lysophosphatidyl-L-serine (C18:1) and lysophosphatidic acid (C16:0). The polypeptide is Patatin-like phospholipase domain-containing protein 7 (Pnpla7) (Rattus norvegicus (Rat)).